The sequence spans 87 residues: Large ribosomal subunit protein bL27 (87 aa).

Positions 1-24 are disordered; it reads MAHKKGTGSTRNGRDSRSQRLGVK.

Belongs to the bacterial ribosomal protein bL27 family.

In Crocosphaera subtropica (strain ATCC 51142 / BH68) (Cyanothece sp. (strain ATCC 51142)), this protein is Large ribosomal subunit protein bL27.